We begin with the raw amino-acid sequence, 343 residues long: Aspartate carbamoyltransferase catalytic subunit (343 aa).

The carbamoyl phosphate site is built by Arg-91 and Thr-92. Residue Lys-119 participates in L-aspartate binding. Carbamoyl phosphate is bound by residues Arg-141, His-171, and Gln-174. Positions 204 and 259 each coordinate L-aspartate. Residues Gly-300 and Pro-301 each coordinate carbamoyl phosphate.

It belongs to the aspartate/ornithine carbamoyltransferase superfamily. ATCase family. In terms of assembly, heterododecamer (2C3:3R2) of six catalytic PyrB chains organized as two trimers (C3), and six regulatory PyrI chains organized as three dimers (R2).

The catalysed reaction is carbamoyl phosphate + L-aspartate = N-carbamoyl-L-aspartate + phosphate + H(+). It participates in pyrimidine metabolism; UMP biosynthesis via de novo pathway; (S)-dihydroorotate from bicarbonate: step 2/3. In terms of biological role, catalyzes the condensation of carbamoyl phosphate and aspartate to form carbamoyl aspartate and inorganic phosphate, the committed step in the de novo pyrimidine nucleotide biosynthesis pathway. The sequence is that of Aspartate carbamoyltransferase catalytic subunit from Burkholderia orbicola (strain MC0-3).